A 424-amino-acid polypeptide reads, in one-letter code: Probable ribonuclease FAU-1 (424 aa).

Belongs to the FAU-1 family.

Functionally, probable RNase involved in rRNA stability through maturation and/or degradation of precursor rRNAs. Binds to RNA in loop regions with AU-rich sequences. The chain is Probable ribonuclease FAU-1 from Saccharolobus islandicus (strain L.S.2.15 / Lassen #1) (Sulfolobus islandicus).